We begin with the raw amino-acid sequence, 364 residues long: Heat-inducible transcription repressor HrcA (364 aa).

The protein belongs to the HrcA family.

In terms of biological role, negative regulator of class I heat shock genes (grpE-dnaK-dnaJ and groELS operons). Prevents heat-shock induction of these operons. This chain is Heat-inducible transcription repressor HrcA, found in Cyanothece sp. (strain PCC 7425 / ATCC 29141).